The following is a 185-amino-acid chain: Photosystem I assembly protein Ycf4 (185 aa).

3 helical membrane-spanning segments follow: residues 22–42 (FFFA…GFSS), 57–77 (ILFV…LFFS), and 101–121 (FYVF…LRVP).

Belongs to the Ycf4 family.

Its subcellular location is the plastid. The protein localises to the chloroplast thylakoid membrane. Seems to be required for the assembly of the photosystem I complex. The protein is Photosystem I assembly protein Ycf4 of Gnetum parvifolium (Small-leaved jointfir).